The following is an 88-amino-acid chain: Small ribosomal subunit protein bS16 (88 aa).

The protein belongs to the bacterial ribosomal protein bS16 family.

This Thermus aquaticus protein is Small ribosomal subunit protein bS16.